The chain runs to 399 residues: Methylthioribose kinase (399 aa).

ATP-binding positions include N40, K57, and 111–113; that span reads EDL. D229 contacts substrate. ATP is bound at residue 246-248; the sequence is DAE. R344 provides a ligand contact to substrate.

It belongs to the methylthioribose kinase family. Homodimer.

The catalysed reaction is 5-(methylsulfanyl)-D-ribose + ATP = 5-(methylsulfanyl)-alpha-D-ribose 1-phosphate + ADP + H(+). Its pathway is amino-acid biosynthesis; L-methionine biosynthesis via salvage pathway; S-methyl-5-thio-alpha-D-ribose 1-phosphate from S-methyl-5'-thioadenosine (hydrolase route): step 2/2. Its function is as follows. Catalyzes the phosphorylation of methylthioribose into methylthioribose-1-phosphate. This Klebsiella pneumoniae subsp. pneumoniae (strain ATCC 700721 / MGH 78578) protein is Methylthioribose kinase.